The chain runs to 165 residues: uncharacterized protein (165 aa).

The helical transmembrane segment at 10 to 27 (VSLTIVFVLFFSADVSLT) threads the bilayer.

Its subcellular location is the membrane. This is an uncharacterized protein from Saccharomyces cerevisiae (strain ATCC 204508 / S288c) (Baker's yeast).